The following is a 353-amino-acid chain: NADH-quinone oxidoreductase subunit H (353 aa).

9 consecutive transmembrane segments (helical) span residues 8–28 (LLVY…LFIW), 75–95 (GVFW…FAAI), 108–128 (IGIL…FMAG), 148–168 (VSYE…TGSL), 178–198 (SVPF…AAMA), 229–249 (LFYL…TTLF), 258–278 (LHPV…IIWV), 297–317 (FLLP…LAAP), and 319–339 (MNTA…ILLF).

The protein belongs to the complex I subunit 1 family. As to quaternary structure, NDH-1 is composed of 14 different subunits. Subunits NuoA, H, J, K, L, M, N constitute the membrane sector of the complex.

It is found in the cell membrane. It carries out the reaction a quinone + NADH + 5 H(+)(in) = a quinol + NAD(+) + 4 H(+)(out). In terms of biological role, NDH-1 shuttles electrons from NADH, via FMN and iron-sulfur (Fe-S) centers, to quinones in the respiratory chain. The immediate electron acceptor for the enzyme in this species is believed to be ubiquinone. Couples the redox reaction to proton translocation (for every two electrons transferred, four hydrogen ions are translocated across the cytoplasmic membrane), and thus conserves the redox energy in a proton gradient. This subunit may bind ubiquinone. This chain is NADH-quinone oxidoreductase subunit H, found in Dehalococcoides mccartyi (strain ATCC BAA-2266 / KCTC 15142 / 195) (Dehalococcoides ethenogenes (strain 195)).